The sequence spans 123 residues: Large ribosomal subunit protein uL14 (123 aa).

Belongs to the universal ribosomal protein uL14 family. In terms of assembly, part of the 50S ribosomal subunit. Forms a cluster with proteins L3 and L19. In the 70S ribosome, L14 and L19 interact and together make contacts with the 16S rRNA in bridges B5 and B8.

Functionally, binds to 23S rRNA. Forms part of two intersubunit bridges in the 70S ribosome. The sequence is that of Large ribosomal subunit protein uL14 from Serratia proteamaculans (strain 568).